Here is a 224-residue protein sequence, read N- to C-terminus: Thiamine-phosphate synthase (224 aa).

4-amino-2-methyl-5-(diphosphooxymethyl)pyrimidine-binding positions include 43–47 (QYRPK) and Asn75. Residues Asp76 and Asp95 each coordinate Mg(2+). Ser114 is a 4-amino-2-methyl-5-(diphosphooxymethyl)pyrimidine binding site. Position 141 to 143 (141 to 143 (SAT)) interacts with 2-[(2R,5Z)-2-carboxy-4-methylthiazol-5(2H)-ylidene]ethyl phosphate. Residue Lys144 coordinates 4-amino-2-methyl-5-(diphosphooxymethyl)pyrimidine. A 2-[(2R,5Z)-2-carboxy-4-methylthiazol-5(2H)-ylidene]ethyl phosphate-binding site is contributed by Gly171.

It belongs to the thiamine-phosphate synthase family. The cofactor is Mg(2+).

The catalysed reaction is 2-[(2R,5Z)-2-carboxy-4-methylthiazol-5(2H)-ylidene]ethyl phosphate + 4-amino-2-methyl-5-(diphosphooxymethyl)pyrimidine + 2 H(+) = thiamine phosphate + CO2 + diphosphate. It carries out the reaction 2-(2-carboxy-4-methylthiazol-5-yl)ethyl phosphate + 4-amino-2-methyl-5-(diphosphooxymethyl)pyrimidine + 2 H(+) = thiamine phosphate + CO2 + diphosphate. The enzyme catalyses 4-methyl-5-(2-phosphooxyethyl)-thiazole + 4-amino-2-methyl-5-(diphosphooxymethyl)pyrimidine + H(+) = thiamine phosphate + diphosphate. The protein operates within cofactor biosynthesis; thiamine diphosphate biosynthesis; thiamine phosphate from 4-amino-2-methyl-5-diphosphomethylpyrimidine and 4-methyl-5-(2-phosphoethyl)-thiazole: step 1/1. Condenses 4-methyl-5-(beta-hydroxyethyl)thiazole monophosphate (THZ-P) and 2-methyl-4-amino-5-hydroxymethyl pyrimidine pyrophosphate (HMP-PP) to form thiamine monophosphate (TMP). This chain is Thiamine-phosphate synthase, found in Methylococcus capsulatus (strain ATCC 33009 / NCIMB 11132 / Bath).